We begin with the raw amino-acid sequence, 728 residues long: Catalase-peroxidase (728 aa).

Residues 97–225 (WHSAGTYRIA…LAAVMMGLIY (129 aa)) constitute a cross-link (tryptophyl-tyrosyl-methioninium (Trp-Tyr) (with M-251)). Residue histidine 98 is the Proton acceptor of the active site. The segment at residues 225 to 251 (YVNPEGVDGNPDPLRTAQDIRITFARM) is a cross-link (tryptophyl-tyrosyl-methioninium (Tyr-Met) (with W-97)). Heme b is bound at residue histidine 266.

Belongs to the peroxidase family. Peroxidase/catalase subfamily. Homodimer or homotetramer. Heme b is required as a cofactor. In terms of processing, formation of the three residue Trp-Tyr-Met cross-link is important for the catalase, but not the peroxidase activity of the enzyme.

It carries out the reaction H2O2 + AH2 = A + 2 H2O. It catalyses the reaction 2 H2O2 = O2 + 2 H2O. Functionally, bifunctional enzyme with both catalase and broad-spectrum peroxidase activity. This Shewanella putrefaciens (strain CN-32 / ATCC BAA-453) protein is Catalase-peroxidase.